The following is a 165-amino-acid chain: Thiol peroxidase (165 aa).

Positions 18–164 (RKVGDKAPNF…YEAAIEAAKK (147 aa)) constitute a Thioredoxin domain. The active-site Cysteine sulfenic acid (-SOH) intermediate is C60. C60 and C94 are joined by a disulfide.

It belongs to the peroxiredoxin family. Tpx subfamily. In terms of assembly, homodimer.

The catalysed reaction is a hydroperoxide + [thioredoxin]-dithiol = an alcohol + [thioredoxin]-disulfide + H2O. Functionally, thiol-specific peroxidase that catalyzes the reduction of hydrogen peroxide and organic hydroperoxides to water and alcohols, respectively. Plays a role in cell protection against oxidative stress by detoxifying peroxides. In Listeria innocua serovar 6a (strain ATCC BAA-680 / CLIP 11262), this protein is Thiol peroxidase.